We begin with the raw amino-acid sequence, 1207 residues long: DNA-directed RNA polymerase subunit beta' (1207 aa).

Zn(2+)-binding residues include Cys60, Cys62, Cys75, and Cys78. Residues Asp449, Asp451, and Asp453 each contribute to the Mg(2+) site. Positions 822, 896, 903, and 906 each coordinate Zn(2+).

It belongs to the RNA polymerase beta' chain family. As to quaternary structure, the RNAP catalytic core consists of 2 alpha, 1 beta, 1 beta' and 1 omega subunit. When a sigma factor is associated with the core the holoenzyme is formed, which can initiate transcription. Mg(2+) serves as cofactor. The cofactor is Zn(2+).

The enzyme catalyses RNA(n) + a ribonucleoside 5'-triphosphate = RNA(n+1) + diphosphate. Functionally, DNA-dependent RNA polymerase catalyzes the transcription of DNA into RNA using the four ribonucleoside triphosphates as substrates. The chain is DNA-directed RNA polymerase subunit beta' from Staphylococcus saprophyticus subsp. saprophyticus (strain ATCC 15305 / DSM 20229 / NCIMB 8711 / NCTC 7292 / S-41).